Consider the following 969-residue polypeptide: ATP-dependent RNA helicase DBP10 (969 aa).

Disordered stretches follow at residues 1–73 (MVKN…KVED) and 78–97 (SLELSDDEDEKKKVDNDDDD). Over residues 32–59 (SDSESDDSSDGSDEEVQDVIEYSSDEEE) the composition is skewed to acidic residues. The short motif at 115 to 143 (GSFASFGLSKLILVNISKRGFRQPTPIQR) is the Q motif element. One can recognise a Helicase ATP-binding domain in the interval 146 to 318 (IPLILQNRDI…KAGLVNPVLV (173 aa)). 159-166 (ARTGSGKT) serves as a coordination point for ATP. The DEAD box signature appears at 266-269 (DEAD). Disordered regions lie at residues 366–402 (QLNDNKADDSDESAEEDEDKKRRKRKSFNRKAMPKAN), 860–924 (KTGA…LERG), and 946–969 (IRKDRKTKENRHAKNARPSKKRKF). The segment covering 374–383 (DSDESAEEDE) has biased composition (acidic residues). A compositionally biased stretch (basic residues) spans 386 to 398 (KRRKRKSFNRKAM). The Helicase C-terminal domain maps to 396-543 (KAMPKANELP…PMYEALERLS (148 aa)). Over residues 897 to 921 (EKAPRLPDKKRDDYHKQKKKVESAL) the composition is skewed to basic and acidic residues. Positions 958 to 969 (AKNARPSKKRKF) are enriched in basic residues.

Belongs to the DEAD box helicase family. DDX54/DBP10 subfamily.

Its subcellular location is the nucleus. The protein resides in the nucleolus. The catalysed reaction is ATP + H2O = ADP + phosphate + H(+). In terms of biological role, ATP-binding RNA helicase involved in the biogenesis of 60S ribosomal subunits and is required for the normal formation of 25S and 5.8S rRNAs. The sequence is that of ATP-dependent RNA helicase DBP10 (DBP10) from Candida glabrata (strain ATCC 2001 / BCRC 20586 / JCM 3761 / NBRC 0622 / NRRL Y-65 / CBS 138) (Yeast).